The following is a 273-amino-acid chain: 4-hydroxy-tetrahydrodipicolinate reductase (273 aa).

NAD(+) contacts are provided by residues 12–17 (GAGGRM) and E38. R39 contacts NADP(+). NAD(+)-binding positions include 102–104 (GTT) and 126–129 (AANF). The Proton donor/acceptor role is filled by H159. H160 serves as a coordination point for (S)-2,3,4,5-tetrahydrodipicolinate. K163 (proton donor) is an active-site residue. 169 to 170 (GT) is a (S)-2,3,4,5-tetrahydrodipicolinate binding site.

It belongs to the DapB family. In terms of assembly, homotetramer.

It is found in the cytoplasm. It carries out the reaction (S)-2,3,4,5-tetrahydrodipicolinate + NAD(+) + H2O = (2S,4S)-4-hydroxy-2,3,4,5-tetrahydrodipicolinate + NADH + H(+). It catalyses the reaction (S)-2,3,4,5-tetrahydrodipicolinate + NADP(+) + H2O = (2S,4S)-4-hydroxy-2,3,4,5-tetrahydrodipicolinate + NADPH + H(+). Its pathway is amino-acid biosynthesis; L-lysine biosynthesis via DAP pathway; (S)-tetrahydrodipicolinate from L-aspartate: step 4/4. Catalyzes the conversion of 4-hydroxy-tetrahydrodipicolinate (HTPA) to tetrahydrodipicolinate. This is 4-hydroxy-tetrahydrodipicolinate reductase from Salmonella choleraesuis (strain SC-B67).